Here is a 305-residue protein sequence, read N- to C-terminus: ATP synthase gamma chain (305 aa).

Belongs to the ATPase gamma chain family. As to quaternary structure, F-type ATPases have 2 components, CF(1) - the catalytic core - and CF(0) - the membrane proton channel. CF(1) has five subunits: alpha(3), beta(3), gamma(1), delta(1), epsilon(1). CF(0) has three main subunits: a, b and c.

It localises to the cell membrane. In terms of biological role, produces ATP from ADP in the presence of a proton gradient across the membrane. The gamma chain is believed to be important in regulating ATPase activity and the flow of protons through the CF(0) complex. In Mycobacterium tuberculosis (strain ATCC 25177 / H37Ra), this protein is ATP synthase gamma chain.